Reading from the N-terminus, the 135-residue chain is MRIIQTTGKRKTAIARAVIREGKGRVRINGKPVEIIEPEIARFTILEPLILAGEEIWNSVDIDVKVEGGGFMGQAEAARMAIARALVEWTGDMSLKEKFMKYDRTMLVGDPRRTEPHKPNRSTKGPRAKRQKSYR.

Residues 107 to 118 are compositionally biased toward basic and acidic residues; it reads LVGDPRRTEPHK. A disordered region spans residues 107–135; that stretch reads LVGDPRRTEPHKPNRSTKGPRAKRQKSYR. Over residues 119–135 the composition is skewed to basic residues; the sequence is PNRSTKGPRAKRQKSYR.

Belongs to the universal ribosomal protein uS9 family. In terms of assembly, part of the 30S ribosomal subunit.

The sequence is that of Small ribosomal subunit protein uS9 from Pyrococcus furiosus (strain ATCC 43587 / DSM 3638 / JCM 8422 / Vc1).